The chain runs to 1091 residues: Ninein homolog (1091 aa).

The interval 1–361 (MEVSADPYEQ…AVEVDERHAS (361 aa)) is sufficient for binding to microtubules. Disordered stretches follow at residues 100–216 (YIES…TTSP), 456–483 (AQTSSSIGGTPEHSPLRPRRHSEDKEEE), 525–602 (KAKK…EELT), and 616–639 (KAAKEGRSLTPESRSKELETSLEQ). Phosphoserine occurs at positions 103, 107, 108, 113, and 141. A Phosphothreonine modification is found at Thr144. A compositionally biased stretch (polar residues) spans 168 to 177 (VQRSSSQSDL). The interval 487-526 (LMEKLAALQMENAQLRDKTDELTIEIESLNVELIRSKTKA) is sufficient for interaction with ens. Basic and acidic residues-rich tracts occupy residues 527 to 537 (KKQEKQEKQED) and 547 to 563 (RRGDSPSKTHLTEESPR). Position 594 is a phosphoserine (Ser594). Residues 616 to 634 (KAAKEGRSLTPESRSKELE) show a composition bias toward basic and acidic residues. Ser701 and Ser714 each carry phosphoserine. The tract at residues 799–919 (AKSLADSKDE…TSCLSHEKCS (121 aa)) is disordered. Over residues 822-845 (SHKTASRNNLTTSETSIFSTTPFE) the composition is skewed to polar residues. A compositionally biased stretch (low complexity) spans 846-860 (SSQSGPSPTNSGNSN). Over residues 894-913 (ETSSTASGKSFESNSKTSCL) the composition is skewed to polar residues.

Interacts with ens.

The protein resides in the cytoplasm. Its subcellular location is the cytoskeleton. It localises to the microtubule organizing center. It is found in the centrosome. The protein localises to the perinuclear region. Functionally, required for the positioning and anchorage of the microtubule minus-ends in various cells. In fat body cells, part of perinuclear non-centrosomal microtubule-organizing centers (ncMTOCs) which function to accommodate the organization of microtubule (MT) networks to control nuclear positioning and dynein motor-based retrograde endosomal trafficking. Within the ncMTOCs, Msp300 and shot anchors the ncMTOC at the nuclear surface and recruits the MT minus-end regulators Patronin and Nin for assembly, anchoring and/or stabilization of circumferential and radial MTs at the ncMTOC. This protein may also function with Patronin to recruit msps to the ncMTOC for the gamma-tubulin-independent elongation of radial MTs. In embryonic myotubes and larval myofibers, functions with ens to regulate myonuclear positioning and, as a consequence, is involved in muscle development. Likely functions by positively regulating ens. Essential for embryogenesis, likely by contributing to accurate chromosome segregation during early embryonic nuclear divisions. However, other reports found that it is not essential for embryogenesis or embryonic cellular divisions. The sequence is that of Ninein homolog from Drosophila melanogaster (Fruit fly).